Here is a 760-residue protein sequence, read N- to C-terminus: Catalase-peroxidase (760 aa).

The segment at 1-22 (MSQGECPVKKVPNVAGSGTRNT) is disordered. The segment at residues 93–242 (WHSAGTYRVT…LAAAHMGLIY (150 aa)) is a cross-link (tryptophyl-tyrosyl-methioninium (Trp-Tyr) (with M-268)). His94 serves as the catalytic Proton acceptor. The segment at 206-226 (KGEGIMDGDQHKTDKSEPHTS) is disordered. Residues 213 to 226 (GDQHKTDKSEPHTS) show a composition bias toward basic and acidic residues. The segment at residues 242–268 (YVNPEGPEGIPDPVAAAHDIRTTFGRM) is a cross-link (tryptophyl-tyrosyl-methioninium (Tyr-Met) (with W-93)). Heme b is bound at residue His283.

This sequence belongs to the peroxidase family. Peroxidase/catalase subfamily. In terms of assembly, homodimer or homotetramer. Requires heme b as cofactor. Post-translationally, formation of the three residue Trp-Tyr-Met cross-link is important for the catalase, but not the peroxidase activity of the enzyme.

The protein resides in the cytoplasm. It carries out the reaction H2O2 + AH2 = A + 2 H2O. The catalysed reaction is 2 H2O2 = O2 + 2 H2O. In terms of biological role, bifunctional enzyme with both catalase and broad-spectrum peroxidase activity. The polypeptide is Catalase-peroxidase (Pyrenophora tritici-repentis (strain Pt-1C-BFP) (Wheat tan spot fungus)).